Here is a 107-residue protein sequence, read N- to C-terminus: uncharacterized protein (107 aa).

Transmembrane regions (helical) follow at residues 11–31 (CVNFVIIIGIPLLIEASILCI) and 58–78 (LFFLSFYMLHFPITLSILAFQ).

The protein localises to the mitochondrion membrane. This is an uncharacterized protein from Saccharomyces cerevisiae (strain ATCC 204508 / S288c) (Baker's yeast).